The primary structure comprises 464 residues: tRNA modification GTPase MnmE (464 aa).

The (6S)-5-formyl-5,6,7,8-tetrahydrofolate site is built by Arg26, Glu92, and Arg131. A TrmE-type G domain is found at 227 to 385; that stretch reads GIKVAILGRV…LISALKDYVS (159 aa). Asn237 serves as a coordination point for K(+). GTP contacts are provided by residues 237-242, 256-262, and 281-284; these read NAGKSS, SNIAGTT, and DTAG. Ser241 is a Mg(2+) binding site. Residues Ser256, Ile258, and Thr261 each coordinate K(+). Mg(2+) is bound at residue Thr262. Lys464 is a binding site for (6S)-5-formyl-5,6,7,8-tetrahydrofolate.

The protein belongs to the TRAFAC class TrmE-Era-EngA-EngB-Septin-like GTPase superfamily. TrmE GTPase family. In terms of assembly, homodimer. Heterotetramer of two MnmE and two MnmG subunits. It depends on K(+) as a cofactor.

Its subcellular location is the cytoplasm. Its function is as follows. Exhibits a very high intrinsic GTPase hydrolysis rate. Involved in the addition of a carboxymethylaminomethyl (cmnm) group at the wobble position (U34) of certain tRNAs, forming tRNA-cmnm(5)s(2)U34. This chain is tRNA modification GTPase MnmE, found in Brachyspira hyodysenteriae (strain ATCC 49526 / WA1).